The chain runs to 434 residues: Histidinol dehydrogenase (434 aa).

NAD(+) is bound by residues tyrosine 130, glutamine 188, and asparagine 211. Substrate-binding residues include serine 237, glutamine 259, and histidine 262. Glutamine 259 and histidine 262 together coordinate Zn(2+). Active-site proton acceptor residues include glutamate 326 and histidine 327. Positions 327, 360, 414, and 419 each coordinate substrate. Aspartate 360 is a binding site for Zn(2+). Histidine 419 contacts Zn(2+).

Belongs to the histidinol dehydrogenase family. As to quaternary structure, homodimer. The cofactor is Zn(2+).

It catalyses the reaction L-histidinol + 2 NAD(+) + H2O = L-histidine + 2 NADH + 3 H(+). It functions in the pathway amino-acid biosynthesis; L-histidine biosynthesis; L-histidine from 5-phospho-alpha-D-ribose 1-diphosphate: step 9/9. Functionally, catalyzes the sequential NAD-dependent oxidations of L-histidinol to L-histidinaldehyde and then to L-histidine. The polypeptide is Histidinol dehydrogenase (Escherichia coli (strain K12)).